The sequence spans 250 residues: MAEQTLSFVDCLTSRFPTVRVSVAQPRGEITLDVPAVEWCAVCRALRDEFDFEQLSDLCGVDYLGYGNTEWDTTDVSAQGFSRGVAGKAVGRFAWGEFPSAGSNDGTQPWDVPQERFAVLAHLISYRHNRRLRVRCFASNDALPIVASLTDVWPGVNWFEREAFDLFGIVFEGHPDLRRILTDYGFIGHPFRKDFPLTGNVEVRYDEEKKRVVYVPVTSVEPRVSVPRVIRDDARFGAAAGESTHSETVK.

The protein belongs to the complex I 30 kDa subunit family. NDH-1 is composed of 14 different subunits. Subunits NuoB, C, D, E, F, and G constitute the peripheral sector of the complex.

The protein resides in the cell inner membrane. It carries out the reaction a quinone + NADH + 5 H(+)(in) = a quinol + NAD(+) + 4 H(+)(out). NDH-1 shuttles electrons from NADH, via FMN and iron-sulfur (Fe-S) centers, to quinones in the respiratory chain. The immediate electron acceptor for the enzyme in this species is believed to be ubiquinone. Couples the redox reaction to proton translocation (for every two electrons transferred, four hydrogen ions are translocated across the cytoplasmic membrane), and thus conserves the redox energy in a proton gradient. The chain is NADH-quinone oxidoreductase subunit C from Xylella fastidiosa (strain 9a5c).